We begin with the raw amino-acid sequence, 539 residues long: Chaperonin GroEL (539 aa).

ATP-binding positions include 30–33 (TLGP), Lys-51, 87–91 (DGTTT), Gly-415, 479–481 (NAA), and Asp-495.

It belongs to the chaperonin (HSP60) family. In terms of assembly, forms a cylinder of 14 subunits composed of two heptameric rings stacked back-to-back. Interacts with the co-chaperonin GroES.

Its subcellular location is the cytoplasm. The catalysed reaction is ATP + H2O + a folded polypeptide = ADP + phosphate + an unfolded polypeptide.. In terms of biological role, together with its co-chaperonin GroES, plays an essential role in assisting protein folding. The GroEL-GroES system forms a nano-cage that allows encapsulation of the non-native substrate proteins and provides a physical environment optimized to promote and accelerate protein folding. The polypeptide is Chaperonin GroEL (Enterobacter agglomerans (Erwinia herbicola)).